Reading from the N-terminus, the 55-residue chain is Large ribosomal subunit protein bL33 (55 aa).

It belongs to the bacterial ribosomal protein bL33 family.

This Sphingopyxis alaskensis (strain DSM 13593 / LMG 18877 / RB2256) (Sphingomonas alaskensis) protein is Large ribosomal subunit protein bL33.